Reading from the N-terminus, the 298-residue chain is Pantothenate synthetase (298 aa).

30–37 (MGNLHEGH) is a binding site for ATP. The Proton donor role is filled by histidine 37. Glutamine 61 is a binding site for (R)-pantoate. Glutamine 61 is a binding site for beta-alanine. Position 149-152 (149-152 (GEKD)) interacts with ATP. A (R)-pantoate-binding site is contributed by glutamine 155. ATP contacts are provided by residues valine 178 and 186–189 (MSSR).

This sequence belongs to the pantothenate synthetase family. Homodimer.

Its subcellular location is the cytoplasm. It catalyses the reaction (R)-pantoate + beta-alanine + ATP = (R)-pantothenate + AMP + diphosphate + H(+). It participates in cofactor biosynthesis; (R)-pantothenate biosynthesis; (R)-pantothenate from (R)-pantoate and beta-alanine: step 1/1. Its function is as follows. Catalyzes the condensation of pantoate with beta-alanine in an ATP-dependent reaction via a pantoyl-adenylate intermediate. The sequence is that of Pantothenate synthetase from Aliivibrio salmonicida (strain LFI1238) (Vibrio salmonicida (strain LFI1238)).